We begin with the raw amino-acid sequence, 335 residues long: GTPase Obg (335 aa).

The Obg domain maps to 1 to 158 (MFVDQITLEL…RLVELELKLI (158 aa)). Residues 159–334 (ADIGLVGFPN…LYDLFKSKLS (176 aa)) enclose the OBG-type G domain. GTP contacts are provided by residues 165 to 172 (GFPNAGKS), 190 to 194 (FTTLH), 215 to 218 (DIPG), 285 to 288 (NKID), and 315 to 317 (SGL). Positions 172 and 192 each coordinate Mg(2+).

The protein belongs to the TRAFAC class OBG-HflX-like GTPase superfamily. OBG GTPase family. In terms of assembly, monomer. Mg(2+) serves as cofactor.

The protein resides in the cytoplasm. An essential GTPase which binds GTP, GDP and possibly (p)ppGpp with moderate affinity, with high nucleotide exchange rates and a fairly low GTP hydrolysis rate. Plays a role in control of the cell cycle, stress response, ribosome biogenesis and in those bacteria that undergo differentiation, in morphogenesis control. This is GTPase Obg from Chlamydia trachomatis serovar A (strain ATCC VR-571B / DSM 19440 / HAR-13).